Here is a 410-residue protein sequence, read N- to C-terminus: Chlorobenzene dioxygenase, ferredoxin reductase component (410 aa).

4 to 35 (HVAIIGNGVAGFTTAQALRAEGFEGRISLIGN) lines the FAD pocket. Residue 145 to 173 (RLVIAGGGLIGCEVATTARKLGLAVTILE) participates in NAD(+) binding.

Belongs to the bacterial ring-hydroxylating dioxygenase ferredoxin reductase family. As to quaternary structure, this dioxygenase system consists of four proteins: the two subunits of the oxygenase component (TecA1 and TecA2), a ferredoxin (TecA3) and a ferredoxin reductase (TecA4). The cofactor is FAD.

The enzyme catalyses 2 reduced [2Fe-2S]-[ferredoxin] + NAD(+) + H(+) = 2 oxidized [2Fe-2S]-[ferredoxin] + NADH. Its pathway is aromatic compound metabolism. Part of the chlorobenzene dioxygenase system that catalyzes the dihydroxylation of a range of aromatic compounds, including chlorinated benzenes and toluenes, and dinuclear aromatics such as biphenyl and dibenzo-p-dioxin. This Cupriavidus sp. (strain PS12) protein is Chlorobenzene dioxygenase, ferredoxin reductase component.